Here is a 216-residue protein sequence, read N- to C-terminus: Kynurenine formamidase (216 aa).

A substrate-binding site is contributed by Trp25. Residues His55, His59, and Asp61 each contribute to the Zn(2+) site. Catalysis depends on His65, which acts as the Proton donor/acceptor. Zn(2+) contacts are provided by His167 and Glu179.

It belongs to the Cyclase 1 superfamily. KynB family. In terms of assembly, homodimer. It depends on Zn(2+) as a cofactor.

It carries out the reaction N-formyl-L-kynurenine + H2O = L-kynurenine + formate + H(+). It participates in amino-acid degradation; L-tryptophan degradation via kynurenine pathway; L-kynurenine from L-tryptophan: step 2/2. In terms of biological role, catalyzes the hydrolysis of N-formyl-L-kynurenine to L-kynurenine, the second step in the kynurenine pathway of tryptophan degradation. The polypeptide is Kynurenine formamidase (Cupriavidus taiwanensis (strain DSM 17343 / BCRC 17206 / CCUG 44338 / CIP 107171 / LMG 19424 / R1) (Ralstonia taiwanensis (strain LMG 19424))).